The sequence spans 362 residues: MTGPLERLARRGLFLLDPETAHGVSIKALKSGVVPSCAAPADTRLEQVIAGLNFPNPLGMAAGYDKNAEVPEALLRLGFGFTEIGTVTPRPQAGNDKPRIFRLVEDEAVINRLGFNNDGHGAALARLQACSRQALIGVNIGANKDSADRIADYVAGIRTFYAVARYFTANISSPNTPGLRDLQARESLAALLSAVLAARDEEAAKTGRRVPVFLKIAPDLTEEGMDDIAAEVLAHNLDGLIVSNTTLARDGLRDQRQAKEAGGLSGRPLFEKSTAVLARMRKRLGPDVPIIGVGGVSSAETAAEKIRAGADLVQLYSCMVYEGPGLPGRIVRGLSQLCDRDKLASIREIRDSRLDYWAGRNV.

Residues 62–66 (AGYDK) and Thr86 contribute to the FMN site. Lys66 contributes to the substrate binding site. 111–115 (NRLGF) is a binding site for substrate. Residues Asn139 and Asn170 each contribute to the FMN site. Asn170 provides a ligand contact to substrate. Ser173 (nucleophile) is an active-site residue. Asn175 contributes to the substrate binding site. FMN-binding residues include Lys215 and Ser243. 244-245 (NT) serves as a coordination point for substrate. FMN contacts are provided by residues Gly266, Gly295, and 316–317 (YS).

Belongs to the dihydroorotate dehydrogenase family. Type 2 subfamily. As to quaternary structure, monomer. Requires FMN as cofactor.

It is found in the cell membrane. The catalysed reaction is (S)-dihydroorotate + a quinone = orotate + a quinol. It participates in pyrimidine metabolism; UMP biosynthesis via de novo pathway; orotate from (S)-dihydroorotate (quinone route): step 1/1. Its function is as follows. Catalyzes the conversion of dihydroorotate to orotate with quinone as electron acceptor. The chain is Dihydroorotate dehydrogenase (quinone) from Sinorhizobium fredii (strain NBRC 101917 / NGR234).